Here is a 161-residue protein sequence, read N- to C-terminus: Nucleotide-binding protein XAC3671 (161 aa).

Belongs to the YajQ family.

Its function is as follows. Nucleotide-binding protein. The sequence is that of Nucleotide-binding protein XAC3671 from Xanthomonas axonopodis pv. citri (strain 306).